Reading from the N-terminus, the 520-residue chain is MPILPILIGILHLSLAEDAKHLDGFSLPSLPSEHLIRYLNTFPKLKQQLPTNLTGKGTISSACWGHERDCTPAGRFQTPQCPGEHTGWARSKEAQVRTFYNQADFGYIQEQLSQLTPQCVPTYLGDSSLECTHYLRFCRGRNLLFDFRGLEQREERIRYHMDVLGPGQLLGHCKLNRTRLSGEMEHIGSALQSWGPELRNFDVLPHPVLESGLCDVVVNTPTFIMKIDATYNMYHHFCDFFNLYASLFVNQSHPAAFNTDVQILIWETYPYDSPFRDTFKAFSQRPVWTLSDVEGKRVCFKNVVLPLLPRMIFGLFYNTPIIQGCSNSGLFRAFSEFILHRLQIPYKPPQQKIRITYLSRRTKYRQVLNEDELLAPLEANDKYDVQRVSYERLPFTNQLAITRNTDILIGMHGAGLTHLLFLPNWACIFELYNCEDPNCYKDLARLRGVRYRTWEQRDLVYPQDEGHHPEGGAHAKFTNYSFDVKEFVHLVDGAAEEILSHKEFPRRASENPSKTQRNEL.

A signal peptide spans 1-16; that stretch reads MPILPILIGILHLSLA. N-linked (GlcNAc...) asparagine glycans are attached at residues asparagine 52, asparagine 176, and asparagine 250. The Required for optimal activity signature appears at 292 to 294; the sequence is DVE. N-linked (GlcNAc...) asparagine glycosylation is present at asparagine 479. Residues 517 to 520 carry the Prevents secretion from ER motif; the sequence is RNEL.

A divalent metal cation serves as cofactor.

It is found in the endoplasmic reticulum lumen. The catalysed reaction is L-seryl-[protein] + UDP-N-acetyl-alpha-D-glucosamine = 3-O-(N-acetyl-beta-D-glucosaminyl)-L-seryl-[protein] + UDP + H(+). It carries out the reaction L-threonyl-[protein] + UDP-N-acetyl-alpha-D-glucosamine = 3-O-(N-acetyl-beta-D-glucosaminyl)-L-threonyl-[protein] + UDP + H(+). In terms of biological role, catalyzes the transfer of a single N-acetylglucosamine from UDP-GlcNAc to a serine or threonine residue in extracellular proteins resulting in their modification with a beta-linked N-acetylglucosamine (O-GlcNAc). Specifically glycosylates the Thr residue located between the fifth and sixth conserved cysteines of folded EGF-like domains. Involved in epithelial cell adhesion/interaction with the extracellular matrix by mediating glycosylation of proteins in the secretory pathway, such as Dumpy (Dp). This chain is EGF domain-specific O-linked N-acetylglucosamine transferase (Eogt), found in Drosophila melanogaster (Fruit fly).